The primary structure comprises 318 residues: Protein phosphatase 1 regulatory subunit 3C (318 aa).

Positions 84–87 match the PP1-binding motif motif; the sequence is RVVF. An interaction with EPM2A region spans residues 141–263; sequence PSADYLSFRN…YRIVHVQWKP (123 aa). The region spanning 149 to 257 is the CBM21 domain; that stretch reads RNHFQKNSVC…NNEGQNYRIV (109 aa).

In terms of assembly, interacts with PPP1CC catalytic subunit of PP1 and associates with glycogen. Forms complexes with glycogen phosphorylase, glycogen synthase and phosphorylase kinase which is necessary for its regulation of PP1 activity. Also interacts with EPM2A/laforin. Post-translationally, ubiquitinated by NHLRC1/malin in a EPM2A/laforin-dependent manner.

Its function is as follows. Acts as a glycogen-targeting subunit for PP1 and regulates its activity. Activates glycogen synthase, reduces glycogen phosphorylase activity and limits glycogen breakdown. Dramatically increases basal and insulin-stimulated glycogen synthesis upon overexpression in a variety of cell types. In Bos taurus (Bovine), this protein is Protein phosphatase 1 regulatory subunit 3C.